The following is a 301-amino-acid chain: ATP synthase gamma chain (301 aa).

It belongs to the ATPase gamma chain family. As to quaternary structure, F-type ATPases have 2 components, CF(1) - the catalytic core - and CF(0) - the membrane proton channel. CF(1) has five subunits: alpha(3), beta(3), gamma(1), delta(1), epsilon(1). CF(0) has three main subunits: a, b and c.

Its subcellular location is the cell inner membrane. In terms of biological role, produces ATP from ADP in the presence of a proton gradient across the membrane. The gamma chain is believed to be important in regulating ATPase activity and the flow of protons through the CF(0) complex. The chain is ATP synthase gamma chain from Helicobacter pylori (strain HPAG1).